The sequence spans 652 residues: Acetyl-coenzyme A synthetase (652 aa).

Residues 190–193 (RGGR) and threonine 310 contribute to the CoA site. Residues 386 to 388 (GEP), 410 to 415 (DTWWQT), aspartate 499, and arginine 514 each bind ATP. CoA is bound at residue serine 522. Arginine 525 is a binding site for ATP. Mg(2+)-binding residues include valine 536, histidine 538, and valine 541. Arginine 583 provides a ligand contact to CoA. At lysine 608 the chain carries N6-acetyllysine.

Belongs to the ATP-dependent AMP-binding enzyme family. Mg(2+) is required as a cofactor. Post-translationally, acetylated. Deacetylation by the SIR2-homolog deacetylase activates the enzyme.

It catalyses the reaction acetate + ATP + CoA = acetyl-CoA + AMP + diphosphate. Functionally, catalyzes the conversion of acetate into acetyl-CoA (AcCoA), an essential intermediate at the junction of anabolic and catabolic pathways. AcsA undergoes a two-step reaction. In the first half reaction, AcsA combines acetate with ATP to form acetyl-adenylate (AcAMP) intermediate. In the second half reaction, it can then transfer the acetyl group from AcAMP to the sulfhydryl group of CoA, forming the product AcCoA. This is Acetyl-coenzyme A synthetase from Methylorubrum extorquens (strain CM4 / NCIMB 13688) (Methylobacterium extorquens).